The sequence spans 126 residues: Follitropin subunit beta (126 aa).

The N-terminal stretch at 1–19 is a signal peptide; the sequence is MKLIQLCILFWCWRAICCQ. 6 disulfides stabilise this stretch: Cys-21–Cys-69, Cys-35–Cys-84, Cys-38–Cys-122, Cys-46–Cys-100, Cys-50–Cys-102, and Cys-105–Cys-112. Residues Asn-25 and Asn-42 are each glycosylated (N-linked (GlcNAc...) asparagine).

The protein belongs to the glycoprotein hormones subunit beta family. In terms of assembly, heterodimer. The active follitropin is a heterodimer composed of an alpha chain/CGA shared with other hormones and a unique beta chain/FSHB shown here.

The protein localises to the secreted. Its function is as follows. Together with the alpha chain CGA constitutes follitropin, the follicle-stimulating hormone, and provides its biological specificity to the hormone heterodimer. Binds FSHR, a G protein-coupled receptor, on target cells to activate downstream signaling pathways. Follitropin is involved in follicle development and spermatogenesis in reproductive organs. The chain is Follitropin subunit beta (FSHB) from Phodopus sungorus (Striped hairy-footed hamster).